The sequence spans 249 residues: Tumor necrosis factor ligand superfamily member 12 (249 aa).

The Cytoplasmic segment spans residues 1–21; it reads MAARRSQRRRGRRGEPGTALL. A helical; Signal-anchor for type II membrane protein transmembrane segment spans residues 22 to 45; it reads APLVLSLGLALACLGLLLVVVSLG. The Extracellular segment spans residues 46–249; sequence SWATLSAQEP…LTYFGLFQVH (204 aa). A disordered region spans residues 52–78; the sequence is AQEPSQEELTAEDRREPPELNPQTEES. The THD domain occupies 107 to 248; it reads IAAHYEVHPR…FLTYFGLFQV (142 aa). Asn139 carries an N-linked (GlcNAc...) asparagine glycan. Cys191 and Cys210 are oxidised to a cystine.

The protein belongs to the tumor necrosis factor family. As to quaternary structure, homotrimer. Interacts with the angiogenic factor AGGF1/VG5Q. The soluble form is produced from the membrane form by proteolytic processing. In terms of tissue distribution, widely expressed.

It localises to the cell membrane. The protein localises to the secreted. In terms of biological role, binds to FN14 and possibly also to TNRFSF12/APO3. Weak inducer of apoptosis in some cell types. Mediates NF-kappa-B activation. Promotes angiogenesis and the proliferation of endothelial cells. Also involved in induction of inflammatory cytokines. Promotes IL8 secretion. The chain is Tumor necrosis factor ligand superfamily member 12 (Tnfsf12) from Mus musculus (Mouse).